Reading from the N-terminus, the 781-residue chain is Pyrin (781 aa).

The Pyrin domain maps to 1-92 (MAKTPSDHLL…AEELHRAAIQ (92 aa)). Polar residues predominate over residues 93–111 (EYSTQENGTDDSAASSSLG). The segment at 93-226 (EYSTQENGTD…AGGAPGQKEC (134 aa)) is disordered. Residues 113–126 (NKPRSLKTPDHPEG) show a composition bias toward basic and acidic residues. The segment covering 153–163 (LSRKPLSKRRE) has biased composition (basic residues). A Phosphoserine modification is found at S242. Residues 266–280 (KTAANLDSATEPRAR) are interaction with RELA. Disordered regions lie at residues 270–322 (NLDS…EGDP) and 336–373 (EAVS…QPLP). A B box-type zinc finger spans residues 370 to 412 (QPLPQCKRHLKQVQLLFCEDHDEPICLICSLSQEHQGHRVRPI). The stretch at 413–442 (EEVALEHKKKIQKQLEHLKKLRKSGEEQRS) forms a coiled coil. The Nuclear localization signal signature appears at 420–437 (KKKIQKQLEHLKKLRKSG). The interval 420 to 582 (KKKIQKQLEH…YFSETLRSEM (163 aa)) is required for homotrimerization and induction of pyroptosomes. In terms of domain architecture, B30.2/SPRY spans 580 to 775 (SEMEMFNVPE…NTAPLTICPV (196 aa)).

As to quaternary structure, homotrimer. Interacts (via the B box-type zinc finger) with PSTPIP1. Interacts (via the B30.2/SPRY domain) with several components of the inflammasome complex, including CASP1 p20 and p10 subunits, CASP5, PYCARD, NLRP1, NLRP2 and NLRP3, as well as with unprocessed IL1B; this interaction may lead to autophagic degradation of these proteins. Component of the AIM2 PANoptosome complex, a multiprotein complex that drives inflammatory cell death (PANoptosis). Interacts with NFKBIA and RELA. Interacts weakly with VASP and ACTR3. Interacts with active ULK1 (phosphorylated on 'Ser-317') and BECN1 simultaneously. Also interacts with ATG16L1 (via WD repeats), and with ATG8 family members, including GABARAP, GABARAPL1 and, to a lesser extent, GABARAPL2, MAP1LC3A/LC3A and MAP1LC3C/LC3C. Interacts with TRIM21. Interacts with YWHAB, YWHAE, YWHAG, YWHAH, YWHAQ and YWHAZ; the interaction is required for the down-regulation of pyrin pro-inflammatory activity. Post-translationally, cleaved by CASP1. The N-terminal cleavage product localizes to the nucleus as a filamentous network and to the cytoplasm, interacts more strongly with RELA and NFKBIA than the full-length protein, enhances the nuclear localization of RELA and induces NFKBIA proteolysis. The C-terminal cleavage product localizes to the cytoplasm. In terms of processing, phosphorylation at Ser-242 is required for the interaction with 14-3-3 proteins and down-regulation of pyrin pro-inflammatory activity. Degraded along with the delivery of its substrates to autolysosomal compartments (at protein level). Expressed in peripheral blood leukocytes, particularly in mature granulocytes and to a lesser extent in monocytes but not in lymphocytes. Detected in spleen, lung and muscle, probably as a result of leukocyte infiltration in these tissues. Not expressed in thymus, prostate, testis, ovary, small intestine, colon, heart, brain, placenta, liver, kidney, pancreas. Expression detected in several myeloid leukemic, colon cancer, and prostate cancer cell lines.

It is found in the cytoplasm. It localises to the cytoskeleton. The protein resides in the cell projection. The protein localises to the ruffle. Its subcellular location is the lamellipodium. It is found in the nucleus. It localises to the cytoplasmic vesicle. The protein resides in the autophagosome. In terms of biological role, involved in the regulation of innate immunity and the inflammatory response in response to IFNG/IFN-gamma. Organizes autophagic machinery by serving as a platform for the assembly of ULK1, Beclin 1/BECN1, ATG16L1, and ATG8 family members and recognizes specific autophagy targets, thus coordinating target recognition with assembly of the autophagic apparatus and initiation of autophagy. Acts as an autophagy receptor for the degradation of several inflammasome components, including CASP1, NLRP1 and NLRP3, hence preventing excessive IL1B- and IL18-mediated inflammation. However, it can also have a positive effect in the inflammatory pathway, acting as an innate immune sensor that triggers PYCARD/ASC specks formation, caspase-1 activation, and IL1B and IL18 production. Together with AIM2, also acts as a mediator of pyroptosis, necroptosis and apoptosis (PANoptosis), an integral part of host defense against pathogens, in response to bacterial infection. It is required for PSTPIP1-induced PYCARD/ASC oligomerization and inflammasome formation. Recruits PSTPIP1 to inflammasomes, and is required for PSTPIP1 oligomerization. The polypeptide is Pyrin (Homo sapiens (Human)).